The primary structure comprises 418 residues: Intracellular coagulation inhibitor 1 (418 aa).

A signal peptide spans 1–24 (MKLGDWKFCLLLFQLMFLTNVCLS). Residues Asn49 and Asn404 are each glycosylated (N-linked (GlcNAc...) asparagine).

The protein belongs to the serpin family. In terms of assembly, monomer. Forms a covalent heterodimer with clotting factor C. Interacts with big defensin. N-glycosylated. As to expression, expressed in hemocytes (at protein level).

Its subcellular location is the secreted. Its function is as follows. Serine protease inhibitor that specifically inhibits clotting factor C. Does not inhibit clotting factor B or proclotting enzyme. The polypeptide is Intracellular coagulation inhibitor 1 (Tachypleus tridentatus (Japanese horseshoe crab)).